Consider the following 155-residue polypeptide: Protein-export protein SecB (155 aa).

This sequence belongs to the SecB family. As to quaternary structure, homotetramer, a dimer of dimers. One homotetramer interacts with 1 SecA dimer.

The protein resides in the cytoplasm. Functionally, one of the proteins required for the normal export of preproteins out of the cell cytoplasm. It is a molecular chaperone that binds to a subset of precursor proteins, maintaining them in a translocation-competent state. It also specifically binds to its receptor SecA. This chain is Protein-export protein SecB, found in Psychromonas ingrahamii (strain DSM 17664 / CCUG 51855 / 37).